The sequence spans 60 residues: Single-pass membrane and coiled-coil domain-containing protein 4 homolog (60 aa).

Residues 1 to 21 (MRKLRGGQTKETRKQKQERRE) form a disordered region. Residues 8–21 (QTKETRKQKQERRE) are compositionally biased toward basic and acidic residues. The stretch at 10-33 (KETRKQKQERREENLKIQQQLKTI) forms a coiled coil. A helical transmembrane segment spans residues 32-52 (TIVLPICGVFLMCIVVYVFLK).

This sequence belongs to the SMCO4 family.

It is found in the membrane. The polypeptide is Single-pass membrane and coiled-coil domain-containing protein 4 homolog (Aedes aegypti (Yellowfever mosquito)).